We begin with the raw amino-acid sequence, 216 residues long: Serine acetyltransferase (216 aa).

Belongs to the transferase hexapeptide repeat family.

It localises to the cytoplasm. It catalyses the reaction L-serine + acetyl-CoA = O-acetyl-L-serine + CoA. It participates in amino-acid biosynthesis; L-cysteine biosynthesis; L-cysteine from L-serine: step 1/2. Inhibited by cysteine. In terms of biological role, catalyzes the acetylation of serine by acetyl-CoA to produce O-acetylserine (OAS). The sequence is that of Serine acetyltransferase from Bacillus licheniformis (strain ATCC 14580 / DSM 13 / JCM 2505 / CCUG 7422 / NBRC 12200 / NCIMB 9375 / NCTC 10341 / NRRL NRS-1264 / Gibson 46).